Here is a 624-residue protein sequence, read N- to C-terminus: APC membrane recruitment protein 2 (624 aa).

Disordered regions lie at residues 77–111, 126–177, 195–230, 342–369, and 397–588; these read EEPC…SVAK, ENVK…GLIL, PLCE…PLNG, ADQD…SKKN, and FSMI…ELPR. Residues 102 to 111 are compositionally biased toward low complexity; that stretch reads DVSSDSSVAK. 2 stretches are compositionally biased toward basic and acidic residues: residues 155 to 168 and 195 to 204; these read SKKD…KEGA and PLCEKEKSEE. The segment covering 352–363 has biased composition (low complexity); it reads KGSKVVPGNGKK. 2 stretches are compositionally biased toward basic and acidic residues: residues 422-435 and 450-469; these read REVK…DRNT and ERGD…RNSD.

The protein belongs to the Amer family.

The protein localises to the cell membrane. Functionally, negative regulator of the canonical Wnt signaling pathway involved in neuroectodermal patterning. Acts by specifically binding phosphatidylinositol 4,5-bisphosphate (PtdIns(4,5)P2), translocating to the cell membrane and interacting with key regulators of the canonical Wnt signaling pathway, such as components of the beta-catenin destruction complex. This is APC membrane recruitment protein 2 (amer2) from Xenopus laevis (African clawed frog).